The primary structure comprises 87 residues: Small ribosomal subunit protein uS15c (87 aa).

It belongs to the universal ribosomal protein uS15 family. In terms of assembly, part of the 30S ribosomal subunit.

It localises to the plastid. Its subcellular location is the chloroplast. This chain is Small ribosomal subunit protein uS15c (rps15), found in Oenothera argillicola (Appalachian evening primrose).